The primary structure comprises 73 residues: Serine rich endogenous peptide 14 (73 aa).

Positions 1–31 (MAAKTSNLVALLLSLFLLLLSISSQVGLGEA) are cleaved as a signal peptide. A disordered region spans residues 44–73 (VSHPSPPPPHRSMAPPIFVPPSTSHKGQGP). The SCOOP motif motif lies at 59 to 73 (PIFVPPSTSHKGQGP). The span at 64 to 73 (PSTSHKGQGP) shows a compositional bias: polar residues. A SxS motif essential for MIK2 binding motif is present at residues 65-67 (STS).

It belongs to the serine rich endogenous peptide (SCOOP) phytocytokine family. Interacts with MIK2 (via extracellular leucine-rich repeat domain); this interaction triggers the formation of complex between MIK2 and the BAK1/SERK3 and SERK4 coreceptors, and subsequent BAK1 activation by phosphorylation. Mostly expressed in seedlings shoots and leaves, and, to a lower extent, in roots, stems, siliques, seeds and flowers.

Its subcellular location is the cell membrane. It is found in the secreted. It localises to the extracellular space. The protein localises to the apoplast. In terms of biological role, brassicaceae-specific phytocytokine (plant endogenous peptide released into the apoplast) perceived by MIK2 in a BAK1/SERK3 and SERK4 coreceptors-dependent manner, that modulates various physiological and antimicrobial processes including growth prevention and reactive oxygen species (ROS) response regulation. Inhibits root growth and regulates root meristems. Prevents general growth and development. Exhibits antibacterial effects against Pseudomonas syringae pv. tomato DC3000, Ralstonia solanacearum, Bacillus subtilis and Agrobacterium tumefaciens, thus being an antimicrobial peptide (AMP). This Arabidopsis thaliana (Mouse-ear cress) protein is Serine rich endogenous peptide 14.